The following is a 215-amino-acid chain: Probable GTP-binding protein EngB (215 aa).

The EngB-type G domain maps to 30–204; that stretch reads EGLEVAFAGR…QMVLAQWLGL (175 aa). GTP is bound by residues 38–45, 64–68, 82–85, 149–152, and 182–185; these read GRSNAGKS, GRTQL, DLPG, TKAD, and LFSA. 2 residues coordinate Mg(2+): S45 and T66.

The protein belongs to the TRAFAC class TrmE-Era-EngA-EngB-Septin-like GTPase superfamily. EngB GTPase family. Mg(2+) is required as a cofactor.

Its function is as follows. Necessary for normal cell division and for the maintenance of normal septation. In Pseudomonas aeruginosa (strain ATCC 15692 / DSM 22644 / CIP 104116 / JCM 14847 / LMG 12228 / 1C / PRS 101 / PAO1), this protein is Probable GTP-binding protein EngB.